The chain runs to 762 residues: 5-methyltetrahydropteroyltriglutamate--homocysteine methyltransferase (762 aa).

5-methyltetrahydropteroyltri-L-glutamate is bound by residues 17–20 and Lys-111; that span reads REWK. L-homocysteine-binding positions include 435–437 and Glu-488; that span reads IGS. L-methionine is bound by residues 435–437 and Glu-488; that span reads IGS. 5-methyltetrahydropteroyltri-L-glutamate is bound by residues 519-520 and Trp-565; that span reads RC. Residue Asp-603 participates in L-homocysteine binding. Asp-603 is an L-methionine binding site. Glu-609 is a binding site for 5-methyltetrahydropteroyltri-L-glutamate. Residues His-645, Cys-647, and Glu-669 each coordinate Zn(2+). The active-site Proton donor is His-698. Residue Cys-730 participates in Zn(2+) binding.

Belongs to the vitamin-B12 independent methionine synthase family. Requires Zn(2+) as cofactor.

The catalysed reaction is 5-methyltetrahydropteroyltri-L-glutamate + L-homocysteine = tetrahydropteroyltri-L-glutamate + L-methionine. Its pathway is amino-acid biosynthesis; L-methionine biosynthesis via de novo pathway; L-methionine from L-homocysteine (MetE route): step 1/1. Its function is as follows. Catalyzes the transfer of a methyl group from 5-methyltetrahydrofolate to homocysteine resulting in methionine formation. The protein is 5-methyltetrahydropteroyltriglutamate--homocysteine methyltransferase of Bacillus cereus (strain ATCC 14579 / DSM 31 / CCUG 7414 / JCM 2152 / NBRC 15305 / NCIMB 9373 / NCTC 2599 / NRRL B-3711).